Reading from the N-terminus, the 216-residue chain is ATP-dependent Clp protease proteolytic subunit (216 aa).

Ser103 acts as the Nucleophile in catalysis. Residue His128 is part of the active site. The segment at 197–216 (RRPALPGDDAPRDVSEGPTP) is disordered.

It belongs to the peptidase S14 family. As to quaternary structure, fourteen ClpP subunits assemble into 2 heptameric rings which stack back to back to give a disk-like structure with a central cavity, resembling the structure of eukaryotic proteasomes.

It is found in the cytoplasm. It carries out the reaction Hydrolysis of proteins to small peptides in the presence of ATP and magnesium. alpha-casein is the usual test substrate. In the absence of ATP, only oligopeptides shorter than five residues are hydrolyzed (such as succinyl-Leu-Tyr-|-NHMec, and Leu-Tyr-Leu-|-Tyr-Trp, in which cleavage of the -Tyr-|-Leu- and -Tyr-|-Trp bonds also occurs).. Cleaves peptides in various proteins in a process that requires ATP hydrolysis. Has a chymotrypsin-like activity. Plays a major role in the degradation of misfolded proteins. In Sphingopyxis alaskensis (strain DSM 13593 / LMG 18877 / RB2256) (Sphingomonas alaskensis), this protein is ATP-dependent Clp protease proteolytic subunit.